The sequence spans 116 residues: Holo-[acyl-carrier-protein] synthase (116 aa).

Asp-5 and Glu-50 together coordinate Mg(2+).

This sequence belongs to the P-Pant transferase superfamily. AcpS family. The cofactor is Mg(2+).

The protein resides in the cytoplasm. It carries out the reaction apo-[ACP] + CoA = holo-[ACP] + adenosine 3',5'-bisphosphate + H(+). Its function is as follows. Transfers the 4'-phosphopantetheine moiety from coenzyme A to a Ser of acyl-carrier-protein. The protein is Holo-[acyl-carrier-protein] synthase of Nitratiruptor sp. (strain SB155-2).